Reading from the N-terminus, the 1171-residue chain is Kinesin-like protein GA13060 (1171 aa).

The tract at residues 1–24 is disordered; that stretch reads MASSISRNGGFCGALQRAPPPMPP. In terms of domain architecture, Kinesin motor spans 40 to 400; the sequence is KVKVMLRVSD…IQIASRIHRL (361 aa). 5 disordered regions span residues 737 to 774, 798 to 820, 932 to 955, 1043 to 1099, and 1124 to 1143; these read LLGQ…GSRD, LVAS…SQRS, PAYR…SLPS, TSSE…QRHR, and RHSH…EGNG. A compositionally biased stretch (basic residues) spans 805 to 816; the sequence is SSHHQHQHHRPS. Polar residues predominate over residues 1043–1059; that stretch reads TSSEAYDSGHDSNSTPR. Residues 1124–1139 show a composition bias toward basic residues; the sequence is RHSHGVGGHKKHRHRH.

It belongs to the TRAFAC class myosin-kinesin ATPase superfamily. Kinesin family. KIF26 subfamily.

It localises to the cytoplasm. It is found in the cytoskeleton. This Drosophila pseudoobscura pseudoobscura (Fruit fly) protein is Kinesin-like protein GA13060.